The primary structure comprises 490 residues: Aspartyl/glutamyl-tRNA(Asn/Gln) amidotransferase subunit B (490 aa).

The protein belongs to the GatB/GatE family. GatB subfamily. Heterotrimer of A, B and C subunits.

The enzyme catalyses L-glutamyl-tRNA(Gln) + L-glutamine + ATP + H2O = L-glutaminyl-tRNA(Gln) + L-glutamate + ADP + phosphate + H(+). The catalysed reaction is L-aspartyl-tRNA(Asn) + L-glutamine + ATP + H2O = L-asparaginyl-tRNA(Asn) + L-glutamate + ADP + phosphate + 2 H(+). Its function is as follows. Allows the formation of correctly charged Asn-tRNA(Asn) or Gln-tRNA(Gln) through the transamidation of misacylated Asp-tRNA(Asn) or Glu-tRNA(Gln) in organisms which lack either or both of asparaginyl-tRNA or glutaminyl-tRNA synthetases. The reaction takes place in the presence of glutamine and ATP through an activated phospho-Asp-tRNA(Asn) or phospho-Glu-tRNA(Gln). The protein is Aspartyl/glutamyl-tRNA(Asn/Gln) amidotransferase subunit B of Prochlorococcus marinus subsp. pastoris (strain CCMP1986 / NIES-2087 / MED4).